The chain runs to 233 residues: MQDSKEQRVHGVFEKIYKNYDQMNSVISFQQHKKWRDKTMRIMNVKEGAKALDVCCGTADWTIALAKAAGKSGEIKGLDFSENMLSVGEQKVKDGGFSQIELLHGNAMELPFDDDTFDYVTIGFGLRNVPDYLTVLKEMRRVVKPGGQVVCLETSQPEMFGFRQAYFMYFKYIMPFFGKLFAKSYKEYSWLQESARDFPGMKELAGLFEEAGLKNVKYHSFTGGVAATHIGWK.

S-adenosyl-L-methionine is bound by residues Thr58, Asp79, and 106–107 (NA).

The protein belongs to the class I-like SAM-binding methyltransferase superfamily. MenG/UbiE family.

It catalyses the reaction a 2-demethylmenaquinol + S-adenosyl-L-methionine = a menaquinol + S-adenosyl-L-homocysteine + H(+). Its pathway is quinol/quinone metabolism; menaquinone biosynthesis; menaquinol from 1,4-dihydroxy-2-naphthoate: step 2/2. Methyltransferase required for the conversion of demethylmenaquinol (DMKH2) to menaquinol (MKH2). This Bacillus subtilis (strain 168) protein is Demethylmenaquinone methyltransferase.